Consider the following 150-residue polypeptide: Ribosome maturation factor RimP (150 aa).

The protein belongs to the RimP family.

It is found in the cytoplasm. In terms of biological role, required for maturation of 30S ribosomal subunits. In Acaryochloris marina (strain MBIC 11017), this protein is Ribosome maturation factor RimP.